A 377-amino-acid polypeptide reads, in one-letter code: Homoserine O-succinyltransferase (377 aa).

Residues 45–356 enclose the AB hydrolase-1 domain; that stretch reads NAVLVCHALN…PHGHDAFLLD (312 aa). S151 serves as the catalytic Nucleophile. R221 serves as a coordination point for substrate. Catalysis depends on residues D317 and H350. D351 is a substrate binding site.

The protein belongs to the AB hydrolase superfamily. MetX family. Homodimer.

It localises to the cytoplasm. It catalyses the reaction L-homoserine + succinyl-CoA = O-succinyl-L-homoserine + CoA. It functions in the pathway amino-acid biosynthesis; L-methionine biosynthesis via de novo pathway; O-succinyl-L-homoserine from L-homoserine: step 1/1. Transfers a succinyl group from succinyl-CoA to L-homoserine, forming succinyl-L-homoserine. This Leptothrix cholodnii (strain ATCC 51168 / LMG 8142 / SP-6) (Leptothrix discophora (strain SP-6)) protein is Homoserine O-succinyltransferase.